We begin with the raw amino-acid sequence, 456 residues long: Aminotransferase ALD1, chloroplastic (456 aa).

The transit peptide at 1-43 directs the protein to the chloroplast; it reads MVSLMFFSSASPLCSSPSKIPKASLDFEMKKLGGSTKLVRNVN. Pyridoxal 5'-phosphate contacts are provided by residues tyrosine 108, 142-143, asparagine 223, aspartate 251, tyrosine 254, serine 281, serine 283, arginine 292, and asparagine 323; that span reads AQ.

Belongs to the class-I pyridoxal-phosphate-dependent aminotransferase family. LL-diaminopimelate aminotransferase subfamily. It depends on pyridoxal 5'-phosphate as a cofactor. Highly expressed in senescing leaves, flowers, siliques and seeds.

It localises to the plastid. The protein localises to the chloroplast. Functionally, aminotransferase involved in local and systemic acquired resistance (SAR) to the bacterial pathogen P.syringae. Required for salicylic acid (SA) and camalexin accumulation upon pathogen infection. Possesses aminotransferase activity in vitro and may generate amino-acid-derived defense signals in vivo. May be involved in ethylene-induced senescence signaling. Involved in the biosynthesis of pipecolate (Pip), a metabolite that orchestrates defense amplification, positive regulation of SA biosynthesis, and priming to guarantee effective local resistance induction and the establishment of SAR. Converts lysine to alpha-keto-epsilon-aminocaproate, which then can spontaneously cyclize to form delta-(1)-piperideine-2-carboxylate (P2C). P2C is converted to Pip by SARD4. May produce non-Pip metabolites that play roles in immunity. Involved in the synthesis of distinct metabolite signals that affect basal and early defenses, and later defense responses. The polypeptide is Aminotransferase ALD1, chloroplastic (Arabidopsis thaliana (Mouse-ear cress)).